A 211-amino-acid polypeptide reads, in one-letter code: 2,3-bisphosphoglycerate-dependent phosphoglycerate mutase (211 aa).

Substrate contacts are provided by residues R9 to N16, T22 to G23, R61, E88 to Y91, K99, R115 to R116, and G159 to N160. H10 acts as the Tele-phosphohistidine intermediate in catalysis. The active-site Proton donor/acceptor is the E88.

The protein belongs to the phosphoglycerate mutase family. BPG-dependent PGAM subfamily. Homodimer.

It carries out the reaction (2R)-2-phosphoglycerate = (2R)-3-phosphoglycerate. It participates in carbohydrate degradation; glycolysis; pyruvate from D-glyceraldehyde 3-phosphate: step 3/5. Functionally, catalyzes the interconversion of 2-phosphoglycerate and 3-phosphoglycerate. In Rhizobium etli (strain CIAT 652), this protein is 2,3-bisphosphoglycerate-dependent phosphoglycerate mutase.